Here is a 31-residue protein sequence, read N- to C-terminus: Potassium channel toxin alpha-KTx 19.2 (31 aa).

3 disulfide bridges follow: cysteine 3–cysteine 22, cysteine 8–cysteine 27, and cysteine 12–cysteine 29.

It belongs to the short scorpion toxin superfamily. Potassium channel inhibitor family. Alpha-KTx 19 subfamily. Monomer. In terms of tissue distribution, expressed by the venom gland.

The protein resides in the secreted. Blocks voltage-gated potassium channels rKv1.1/KCNA1, rKv1.2/KCNA2, hKv1.3/KCNA3, rKv1.6/KCNA6 (IC(50)=75.9 nM) and, to a lesser extent, Shaker IR (with the inactivation domain removed). The polypeptide is Potassium channel toxin alpha-KTx 19.2 (Buthus occitanus tunetanus (Common European scorpion)).